The following is a 179-amino-acid chain: ATP-dependent protease subunit HslV (179 aa).

Thr7 is a catalytic residue. Gly162, Cys165, and Thr168 together coordinate Na(+).

This sequence belongs to the peptidase T1B family. HslV subfamily. A double ring-shaped homohexamer of HslV is capped on each side by a ring-shaped HslU homohexamer. The assembly of the HslU/HslV complex is dependent on binding of ATP.

It is found in the cytoplasm. The enzyme catalyses ATP-dependent cleavage of peptide bonds with broad specificity.. Allosterically activated by HslU binding. Functionally, protease subunit of a proteasome-like degradation complex believed to be a general protein degrading machinery. The polypeptide is ATP-dependent protease subunit HslV (Bordetella pertussis (strain Tohama I / ATCC BAA-589 / NCTC 13251)).